The primary structure comprises 528 residues: Protein arginine N-methyltransferase 3 (528 aa).

Positions 1–43 (MCSLAAGNGRGAELGPEPLELSDSGDDAGWEDEDADTEPAHGR) are disordered. Position 2 is an N-acetylcysteine (Cys-2). Residues Ser-22 and Ser-24 each carry the phosphoserine modification. Residues 23–37 (DSGDDAGWEDEDADT) show a composition bias toward acidic residues. A C2H2-type zinc finger spans residues 46–69 (TPCLFCDRLFASAEETFSHCKLEH). Phosphoserine is present on Ser-169. Positions 184–528 (MKQFAQDFVM…NSSTQTYSLQ (345 aa)) are mediates interaction with ALDH1A1. The 315-residue stretch at 214–528 (DGVYFSSYGH…NSSTQTYSLQ (315 aa)) folds into the SAM-dependent MTase PRMT-type domain. Residues Arg-236, Gly-260, Asp-282, Ser-284, Ile-310, and Glu-311 each contribute to the S-adenosyl-L-homocysteine site. Active-site residues include Glu-326 and Glu-335.

This sequence belongs to the class I-like SAM-binding methyltransferase superfamily. Protein arginine N-methyltransferase family. In terms of assembly, monomer and homodimer. Interacts with EPB41L3 (via FERM domain); the interaction is direct and inhibits the protein-arginine N-methyltransferase activity of PRMT3. Interacts with the 40S ribosomal protein RPS2. Interacts with ALDH1A1; the interaction is direct, inhibits ALDH1A1 aldehyde dehydrogenase activity and is independent of the methyltransferase activity of PRMT3.

The protein localises to the cytoplasm. Its subcellular location is the cytosol. It is found in the nucleus. It catalyses the reaction L-arginyl-[protein] + S-adenosyl-L-methionine = N(omega)-methyl-L-arginyl-[protein] + S-adenosyl-L-homocysteine + H(+). It carries out the reaction L-arginyl-[protein] + 2 S-adenosyl-L-methionine = N(omega),N(omega)-dimethyl-L-arginyl-[protein] + 2 S-adenosyl-L-homocysteine + 2 H(+). With respect to regulation, inhibited by N-ethylmaleimide and high concentrations of zinc chloride. Functionally, protein-arginine N-methyltransferase that catalyzes both the monomethylation and asymmetric dimethylation of the guanidino nitrogens of arginine residues in target proteins, and therefore falls into the group of type I methyltransferases. Catalyzes the asymmetric arginine dimethylation at multiple sites in the Arg/Gly-rich region of small ribosomal subunit protein uS5/RPS2. Also appears to methylate other ribosomal proteins. May regulate retinoic acid synthesis and signaling by inhibiting ALDH1A1 retinal dehydrogenase activity. Contributes to methylation of histone H4 'Arg-3', a specific tag for epigenetic transcriptional activation. Promotes osteogenesis. The sequence is that of Protein arginine N-methyltransferase 3 from Mus musculus (Mouse).